We begin with the raw amino-acid sequence, 287 residues long: Oxaloacetate decarboxylase (287 aa).

Residue Ser50 participates in substrate binding. Mg(2+) is bound at residue Asp88. Substrate is bound by residues Arg159 and His235.

This sequence belongs to the isocitrate lyase/PEP mutase superfamily. Oxaloacetate decarboxylase family. As to quaternary structure, homotetramer; dimer of dimers. Mg(2+) is required as a cofactor.

It carries out the reaction oxaloacetate + H(+) = pyruvate + CO2. Functionally, catalyzes the decarboxylation of oxaloacetate into pyruvate. Seems to play a role in maintaining cellular concentrations of bicarbonate and pyruvate. In Pseudomonas paraeruginosa (strain DSM 24068 / PA7) (Pseudomonas aeruginosa (strain PA7)), this protein is Oxaloacetate decarboxylase.